The sequence spans 595 residues: Cyclin-dependent kinase-like 3 (595 aa).

The Protein kinase domain maps to 4–286; the sequence is YETLGKVGEG…STDLLRHDYF (283 aa). ATP-binding positions include 10–18 and lysine 33; that span reads VGEGSYGTV. Residues 45–51 carry the [NKR]KIAxRE motif; it reads KIATREI. Aspartate 125 acts as the Proton acceptor in catalysis. Threonine 158 carries the post-translational modification Phosphothreonine. Tyrosine 160 is subject to Phosphotyrosine. Disordered regions lie at residues 362–427, 448–513, and 551–586; these read VIKA…PHAG, SSNL…NKRK, and RESKKTDSSKIPTLLSMDPNQEKQEGGDGDCEGKNL. A compositionally biased stretch (basic and acidic residues) spans 368–386; sequence GKGDVPDQKKPEYEGDHRQ. The segment covering 387-397 has biased composition (polar residues); that stretch reads QGTADDTQPSS. Positions 448–457 are enriched in low complexity; that stretch reads SSNLSHPNSR. Polar residues-rich tracts occupy residues 468–491 and 499–509; these read SSQTIGQTLSNSRQEDTGPTQVQT and RTGQNDQISSG. The segment covering 570 to 585 has biased composition (basic and acidic residues); it reads NQEKQEGGDGDCEGKN.

It belongs to the protein kinase superfamily. CMGC Ser/Thr protein kinase family. CDC2/CDKX subfamily.

It is found in the cytoplasm. It catalyses the reaction L-seryl-[protein] + ATP = O-phospho-L-seryl-[protein] + ADP + H(+). The enzyme catalyses L-threonyl-[protein] + ATP = O-phospho-L-threonyl-[protein] + ADP + H(+). This Mus musculus (Mouse) protein is Cyclin-dependent kinase-like 3.